The chain runs to 354 residues: Sulfate/thiosulfate import ATP-binding protein CysA (354 aa).

Residues 3–237 form the ABC transporter domain; that stretch reads IEVRGLSKRF…PATPFVYGFL (235 aa). 35 to 42 serves as a coordination point for ATP; sequence GPSGCGKT.

It belongs to the ABC transporter superfamily. Sulfate/tungstate importer (TC 3.A.1.6) family. The complex is composed of two ATP-binding proteins (CysA), two transmembrane proteins (CysT and CysW) and a solute-binding protein (CysP).

Its subcellular location is the cell inner membrane. The catalysed reaction is sulfate(out) + ATP + H2O = sulfate(in) + ADP + phosphate + H(+). It carries out the reaction thiosulfate(out) + ATP + H2O = thiosulfate(in) + ADP + phosphate + H(+). In terms of biological role, part of the ABC transporter complex CysAWTP involved in sulfate/thiosulfate import. Responsible for energy coupling to the transport system. This is Sulfate/thiosulfate import ATP-binding protein CysA from Bordetella bronchiseptica (strain ATCC BAA-588 / NCTC 13252 / RB50) (Alcaligenes bronchisepticus).